The sequence spans 328 residues: Small neutral protease regulatory protein (328 aa).

Residues 1–60 (MELEVRHLRALCAIADAGSLHRAARRLGVAQPTLSTQLTRIEQALGGPLFTRERTGCRPT) enclose the HTH lysR-type domain. The H-T-H motif DNA-binding region spans 20 to 39 (LHRAARRLGVAQPTLSTQLT).

The protein belongs to the LysR transcriptional regulatory family.

Its function is as follows. Transcriptional trans-activator of the gene (mprA) for the small neutral protease. The protein is Small neutral protease regulatory protein (mprR) of Streptomyces coelicolor (strain ATCC BAA-471 / A3(2) / M145).